A 372-amino-acid chain; its full sequence is MAKQYDSVECPFCDEVTKYEKLAKIGQGTFGEVFKAKHRKTGQKVALKKVLMENEKEGFPITALREIKILQLLKHENVVNLIEICRTKASPYNRCKGSIYLVFDFCEHDLAGLLSNVLVKFTLSEIKRVMQMLLNGLYYIHRNKILHRDMKAANVLITRDGVLKLADFGLARAFSLAKNSQPNRYTNRVVTLWYRPPELLLGERDYGPPIDLWGAGCIMAEMWTRSPIMQGNTEQHQLALISQLCGSITPEVWPNVDKYELFEKVELVKGQKRKVKDRLKAYVRDPYALDLIDKLLVLDPAQRIDSDDALNHDFFWSDPMPSDLKGMLSTHLTSMFEYLAPPRRKGSQITQQSTNQSRNPATTNQTEFERVF.

Residues 19–315 form the Protein kinase domain; sequence YEKLAKIGQG…SDDALNHDFF (297 aa). 25-33 is an ATP binding site; sequence IGQGTFGEV. Lysine 44 carries the post-translational modification N6-acetyllysine; by EP300/CBP, PCAF/KAT2B and GCN5/KAT2A. ATP-binding positions include lysine 48 and 104–106; that span reads DFC. Lysine 48 is subject to N6-acetyllysine; by PCAF/KAT2B and GCN5/KAT2A. Aspartate 149 functions as the Proton acceptor in the catalytic mechanism. The interval 166–191 is T-loop; that stretch reads ADFGLARAFSLAKNSQPNRYTNRVVT. Residue aspartate 167 coordinates ATP. A Phosphoserine modification is found at serine 175. Position 186 is a phosphothreonine; by CaMK1D (threonine 186). The interval 343–372 is disordered; the sequence is RRKGSQITQQSTNQSRNPATTNQTEFERVF. Serine 347 is modified (phosphoserine; by CDK9 and PKA). Residues 347–366 are compositionally biased toward polar residues; it reads SQITQQSTNQSRNPATTNQT. The residue at position 350 (threonine 350) is a Phosphothreonine; by CDK9. Phosphoserine; by CDK9 is present on serine 353. Threonine 354 is modified (phosphothreonine; by CDK9). Serine 357 carries the phosphoserine; by CDK9 modification. Phosphothreonine; by CDK9 is present on residues threonine 362 and threonine 363.

The protein belongs to the protein kinase superfamily. CMGC Ser/Thr protein kinase family. CDC2/CDKX subfamily. As to quaternary structure, component of the super elongation complex (SEC), at least composed of EAF1, EAF2, CDK9, MLLT3/AF9, AFF (AFF1 or AFF4), the P-TEFb complex and ELL (ELL, ELL2 or ELL3). Associates with CCNT1/cyclin-T1, CCNT2/cyclin-T2 (isoform A and isoform B) or CCNK/cyclin-K to form active P-TEFb. P-TEFb forms a complex with AFF4/AF5Q31 and is part of the super elongation complex (SEC). Component of a complex which is composed of at least 5 members: HTATSF1/Tat-SF1, P-TEFb complex, RNA pol II, SUPT5H, and NCL/nucleolin. Associates with UBR5 and forms a transcription regulatory complex composed of CDK9, RNAP II, UBR5 and TFIIS/TCEA1 that can stimulate target gene transcription (e.g. gamma fibrinogen/FGG) by recruiting their promoters. Component of the 7SK snRNP inactive complex which is composed of at least 8 members: P-TEFb (composed of CDK9 and CCNT1/cyclin-T1), HEXIM1, HEXIM2, LARP7, BCDIN3, SART3 proteins and 7SK and U6 snRNAs. This inactive 7SK snRNP complex can also interact with NCOR1 and HDAC3, probably to regulate CDK9 acetylation. Release of P-TEFb from P-TEFb/7SK snRNP complex requires both PP2B to transduce calcium Ca(2+) signaling in response to stimuli (e.g. UV or hexamethylene bisacetamide (HMBA)), and PPP1CA to dephosphorylate Thr-186. This released P-TEFb remains inactive in the pre-initiation complex with BRD4 until new Thr-186 phosphorylation occurs after the synthesis of a short RNA. Interacts with BRD4; to target chromatin binding. Interacts with JMJD6. Interacts with activated nuclear STAT3 and RELA/p65. Binds to AR and MYOD1. Forms a complex composed of CDK9, CCNT1/cyclin-T1, EP300 and GATA4 that stimulates hypertrophy in cardiomyocytes. The large PER complex involved in the repression of transcriptional termination is composed of at least PER2, CDK9, DDX5, DHX9, NCBP1 and POLR2A. Interacts with HSF1. Interacts with TBX21. Interacts with WDR43. Interacts with ZMYND8; the association appears to occur between homodimeric ZMYND8 and the activated form of the P-TEFb complex. Post-translationally, autophosphorylation at Thr-186, Ser-347, Thr-350, Ser-353, Thr-354 and Ser-357 triggers kinase activity by promoting cyclin and substrate binding upon conformational changes. Thr-186 phosphorylation requires the calcium Ca(2+) signaling pathway, including CaMK1D and calmodulin. This inhibition is relieved by Thr-29 dephosphorylation. Phosphorylation at Ser-175 inhibits kinase activity. Can be phosphorylated on either Thr-362 or Thr-363 but not on both simultaneously. In terms of processing, dephosphorylation of Thr-186 by PPM1A and PPM1B blocks CDK9 activity and may lead to CDK9 proteasomal degradation. However, PPP1CA-mediated Thr-186 dephosphorylation is required to release P-TEFb from its inactive P-TEFb/7SK snRNP complex. Dephosphorylated at Ser-347 by the PNUTS-PP1 complex during RNA polymerase II transcription pause-release. Dephosphorylation of C-terminus Thr and Ser residues by protein phosphatase-1 (PP1) triggers CDK9 activity. N6-acetylation of Lys-44 promotes kinase activity, whereas acetylation of both Lys-44 and Lys-48 mediated by PCAF/KAT2B and GCN5/KAT2A reduces kinase activity. The acetylated form associates with PML bodies in the nuclear matrix and with the transcriptionally silent HIV-1 genome; deacetylated upon transcription stimulation. Deacetylated by SIRT7, promoting the kinase activity and subsequent 'Ser-2' phosphorylation of the C-terminal domain (CTD) of RNA polymerase II. Post-translationally, polyubiquitinated and thus activated by UBR5. This ubiquitination is promoted by TFIIS/TCEA1 and favors 'Ser-2' phosphorylation of RPB1/POLR2A CTD.

It is found in the nucleus. It localises to the cytoplasm. Its subcellular location is the PML body. The catalysed reaction is L-seryl-[protein] + ATP = O-phospho-L-seryl-[protein] + ADP + H(+). It carries out the reaction L-threonyl-[protein] + ATP = O-phospho-L-threonyl-[protein] + ADP + H(+). It catalyses the reaction [DNA-directed RNA polymerase] + ATP = phospho-[DNA-directed RNA polymerase] + ADP + H(+). Activation by Thr-186 phosphorylation is calcium Ca(2+) signaling pathway-dependent; actively inactivated by dephosphorylation mediated by PPP1CA, PPM1A and PPM1B. Reversibly repressed by acetylation at Lys-44 and Lys-48. Protein kinase involved in the regulation of transcription. Member of the cyclin-dependent kinase pair (CDK9/cyclin-T) complex, also called positive transcription elongation factor b (P-TEFb), which facilitates the transition from abortive to productive elongation by phosphorylating the CTD (C-terminal domain) of the large subunit of RNA polymerase II (RNAP II) POLR2A, SUPT5H and RDBP. This complex is inactive when in the 7SK snRNP complex form. Phosphorylates EP300, MYOD1, RPB1/POLR2A and AR and the negative elongation factors DSIF and NELFE. Regulates cytokine inducible transcription networks by facilitating promoter recognition of target transcription factors (e.g. TNF-inducible RELA/p65 activation and IL-6-inducible STAT3 signaling). Promotes RNA synthesis in genetic programs for cell growth, differentiation and viral pathogenesis. P-TEFb is also involved in cotranscriptional histone modification, mRNA processing and mRNA export. Modulates a complex network of chromatin modifications including histone H2B monoubiquitination (H2Bub1), H3 lysine 4 trimethylation (H3K4me3) and H3K36me3; integrates phosphorylation during transcription with chromatin modifications to control co-transcriptional histone mRNA processing. The CDK9/cyclin-K complex has also a kinase activity towards CTD of RNAP II and can substitute for CDK9/cyclin-T P-TEFb in vitro. Replication stress response protein; the CDK9/cyclin-K complex is required for genome integrity maintenance, by promoting cell cycle recovery from replication arrest and limiting single-stranded DNA amount in response to replication stress, thus reducing the breakdown of stalled replication forks and avoiding DNA damage. In addition, probable function in DNA repair of isoform 2 via interaction with KU70/XRCC6. Promotes cardiac myocyte enlargement. RPB1/POLR2A phosphorylation on 'Ser-2' in CTD activates transcription. AR phosphorylation modulates AR transcription factor promoter selectivity and cell growth. DSIF and NELF phosphorylation promotes transcription by inhibiting their negative effect. The phosphorylation of MYOD1 enhances its transcriptional activity and thus promotes muscle differentiation. Catalyzes phosphorylation of KAT5, promoting KAT5 recruitment to chromatin and histone acetyltransferase activity. The protein is Cyclin-dependent kinase 9 (CDK9) of Bos taurus (Bovine).